The primary structure comprises 795 residues: Antibiotic resistant DNA gyrase subunit B (795 aa).

A Toprim domain is found at 421 to 536; that stretch reads SELYLVEGNS…RGYIYIAQPP (116 aa). Residues glutamate 427, aspartate 501, and aspartate 503 each coordinate Mg(2+).

It belongs to the type II topoisomerase GyrB family. In terms of assembly, heterotetramer, composed of two GyrA and two GyrB chains. In the heterotetramer, GyrA contains the active site tyrosine that forms a transient covalent intermediate with DNA, while GyrB binds cofactors and catalyzes ATP hydrolysis. Mg(2+) is required as a cofactor. Requires Mn(2+) as cofactor. It depends on Ca(2+) as a cofactor.

Its subcellular location is the cytoplasm. It carries out the reaction ATP-dependent breakage, passage and rejoining of double-stranded DNA.. A type II topoisomerase that negatively supercoils closed circular double-stranded (ds) DNA in an ATP-dependent manner to modulate DNA topology and maintain chromosomes in an underwound state. Negative supercoiling favors strand separation, and DNA replication, transcription, recombination and repair, all of which involve strand separation. Also able to catalyze the interconversion of other topological isomers of dsDNA rings, including catenanes and knotted rings. Type II topoisomerases break and join 2 DNA strands simultaneously in an ATP-dependent manner. This chain is Antibiotic resistant DNA gyrase subunit B, found in Neisseria gonorrhoeae.